A 310-amino-acid chain; its full sequence is Mycothiol acetyltransferase (310 aa).

N-acetyltransferase domains lie at 5-155 (TTVE…HPAR) and 160-309 (PPFR…LPAA). 80–82 (LLV) contacts acetyl-CoA. Residues Asp-187, Lys-226, and Glu-238 each coordinate 1D-myo-inositol 2-(L-cysteinylamino)-2-deoxy-alpha-D-glucopyranoside. An acetyl-CoA-binding site is contributed by 242–244 (IAT). Tyr-276 is a 1D-myo-inositol 2-(L-cysteinylamino)-2-deoxy-alpha-D-glucopyranoside binding site. 281–286 (NERALR) is an acetyl-CoA binding site.

Belongs to the acetyltransferase family. MshD subfamily. In terms of assembly, monomer.

It carries out the reaction 1D-myo-inositol 2-(L-cysteinylamino)-2-deoxy-alpha-D-glucopyranoside + acetyl-CoA = mycothiol + CoA + H(+). In terms of biological role, catalyzes the transfer of acetyl from acetyl-CoA to desacetylmycothiol (Cys-GlcN-Ins) to form mycothiol. The chain is Mycothiol acetyltransferase from Acidimicrobium ferrooxidans (strain DSM 10331 / JCM 15462 / NBRC 103882 / ICP).